The primary structure comprises 419 residues: Potassium/proton antiporter CemA (419 aa).

4 helical membrane passes run 196–216, 297–317, 344–364, and 371–391; these read LASI…TLLF, IIEL…LCIA, ILLI…EVLI, and FGFV…PVVL.

This sequence belongs to the CemA family.

It localises to the plastid. It is found in the chloroplast inner membrane. The enzyme catalyses K(+)(in) + H(+)(out) = K(+)(out) + H(+)(in). Functionally, contributes to K(+)/H(+) antiport activity by supporting proton efflux to control proton extrusion and homeostasis in chloroplasts in a light-dependent manner to modulate photosynthesis. Prevents excessive induction of non-photochemical quenching (NPQ) under continuous-light conditions. Indirectly promotes efficient inorganic carbon uptake into chloroplasts. This Chara vulgaris (Common stonewort) protein is Potassium/proton antiporter CemA.